The chain runs to 383 residues: Protein COS7 (383 aa).

The Cytoplasmic portion of the chain corresponds to Met-1–Glu-42. The chain crosses the membrane as a helical span at residues Ile-43–Trp-63. The Extracellular segment spans residues Lys-64–Pro-72. Residues Leu-73–Leu-93 form a helical membrane-spanning segment. Over Ser-94–Arg-232 the chain is Cytoplasmic. Residues Ile-233–Gln-253 form a helical membrane-spanning segment. Position 254 (His-254) is a topological domain, extracellular. A helical transmembrane segment spans residues Phe-255 to Phe-275. At Gln-276–Lys-383 the chain is on the cytoplasmic side.

It belongs to the DUP/COS family.

The protein localises to the membrane. The chain is Protein COS7 (COS7) from Saccharomyces cerevisiae (strain ATCC 204508 / S288c) (Baker's yeast).